Consider the following 188-residue polypeptide: Elongation factor P (188 aa).

Belongs to the elongation factor P family.

The protein localises to the cytoplasm. Its pathway is protein biosynthesis; polypeptide chain elongation. Involved in peptide bond synthesis. Stimulates efficient translation and peptide-bond synthesis on native or reconstituted 70S ribosomes in vitro. Probably functions indirectly by altering the affinity of the ribosome for aminoacyl-tRNA, thus increasing their reactivity as acceptors for peptidyl transferase. This Rickettsia canadensis (strain McKiel) protein is Elongation factor P.